Consider the following 437-residue polypeptide: GTPase Obg (437 aa).

One can recognise an Obg domain in the interval 2-160 (SMFLDTAKIK…RNLELELKVL (159 aa)). Residues 161–338 (ADVGLVGFPS…LLEATAELLE (178 aa)) enclose the OBG-type G domain. GTP is bound by residues 167–174 (GFPSVGKS), 192–196 (FTTIV), 214–217 (DLPG), 284–287 (NKMD), and 319–321 (SGI). 2 residues coordinate Mg(2+): Ser174 and Thr194. In terms of domain architecture, OCT spans 359–437 (GFNPDEPEFA…IGKFEFEFVD (79 aa)).

Belongs to the TRAFAC class OBG-HflX-like GTPase superfamily. OBG GTPase family. In terms of assembly, monomer. Mg(2+) serves as cofactor.

It localises to the cytoplasm. Its function is as follows. An essential GTPase which binds GTP, GDP and possibly (p)ppGpp with moderate affinity, with high nucleotide exchange rates and a fairly low GTP hydrolysis rate. Plays a role in control of the cell cycle, stress response, ribosome biogenesis and in those bacteria that undergo differentiation, in morphogenesis control. In Streptococcus suis (strain 05ZYH33), this protein is GTPase Obg.